Here is a 225-residue protein sequence, read N- to C-terminus: NAD(P)H-quinone oxidoreductase subunit K, chloroplastic (225 aa).

The [4Fe-4S] cluster site is built by Cys43, Cys44, Cys108, and Cys139.

Belongs to the complex I 20 kDa subunit family. In terms of assembly, NDH is composed of at least 16 different subunits, 5 of which are encoded in the nucleus. [4Fe-4S] cluster is required as a cofactor.

The protein localises to the plastid. The protein resides in the chloroplast thylakoid membrane. It catalyses the reaction a plastoquinone + NADH + (n+1) H(+)(in) = a plastoquinol + NAD(+) + n H(+)(out). The enzyme catalyses a plastoquinone + NADPH + (n+1) H(+)(in) = a plastoquinol + NADP(+) + n H(+)(out). Its function is as follows. NDH shuttles electrons from NAD(P)H:plastoquinone, via FMN and iron-sulfur (Fe-S) centers, to quinones in the photosynthetic chain and possibly in a chloroplast respiratory chain. The immediate electron acceptor for the enzyme in this species is believed to be plastoquinone. Couples the redox reaction to proton translocation, and thus conserves the redox energy in a proton gradient. This Guizotia abyssinica (Niger) protein is NAD(P)H-quinone oxidoreductase subunit K, chloroplastic.